The chain runs to 207 residues: MARYLGPKAKLSRREGTDLFLKSARRSIGDKAKFDSKPGQHGRTSGARTSDFGLQLREKQKVKRMYGVLEKQFRRYFEEADRRKGNTGANLLSLLESRLDNVVYRMGFGSTRAEARQLVSHKAMTVNGKSVNIPSYMVKAGDMIAVRDKSKKQNRIVEALQLAQQVGMPAWVEINAEKAEGTFKAVPDRDQFAADVNESLIVELYSR.

Positions 31-53 are disordered; the sequence is KAKFDSKPGQHGRTSGARTSDFG. One can recognise an S4 RNA-binding domain in the interval 97–160; sequence SRLDNVVYRM…KKQNRIVEAL (64 aa).

It belongs to the universal ribosomal protein uS4 family. As to quaternary structure, part of the 30S ribosomal subunit. Contacts protein S5. The interaction surface between S4 and S5 is involved in control of translational fidelity.

Its function is as follows. One of the primary rRNA binding proteins, it binds directly to 16S rRNA where it nucleates assembly of the body of the 30S subunit. Functionally, with S5 and S12 plays an important role in translational accuracy. In Albidiferax ferrireducens (strain ATCC BAA-621 / DSM 15236 / T118) (Rhodoferax ferrireducens), this protein is Small ribosomal subunit protein uS4.